A 175-amino-acid polypeptide reads, in one-letter code: CDP-archaeol synthase (175 aa).

The next 4 helical transmembrane spans lie at 41-61 (GLFS…WLSM), 78-98 (YASA…GDMF), 122-142 (FVVG…VSNF), and 150-170 (VLIM…FIGV).

It belongs to the CDP-archaeol synthase family. It depends on Mg(2+) as a cofactor.

It localises to the cell membrane. The catalysed reaction is 2,3-bis-O-(geranylgeranyl)-sn-glycerol 1-phosphate + CTP + H(+) = CDP-2,3-bis-O-(geranylgeranyl)-sn-glycerol + diphosphate. The protein operates within membrane lipid metabolism; glycerophospholipid metabolism. Functionally, catalyzes the formation of CDP-2,3-bis-(O-geranylgeranyl)-sn-glycerol (CDP-archaeol) from 2,3-bis-(O-geranylgeranyl)-sn-glycerol 1-phosphate (DGGGP) and CTP. This reaction is the third ether-bond-formation step in the biosynthesis of archaeal membrane lipids. The sequence is that of CDP-archaeol synthase from Methanosarcina acetivorans (strain ATCC 35395 / DSM 2834 / JCM 12185 / C2A).